The primary structure comprises 248 residues: DNA repair protein RecO (248 aa).

It belongs to the RecO family.

Its function is as follows. Involved in DNA repair and RecF pathway recombination. The polypeptide is DNA repair protein RecO (Thermoanaerobacter sp. (strain X514)).